Reading from the N-terminus, the 405-residue chain is Tryptophan synthase beta chain (405 aa).

Lysine 86 carries the N6-(pyridoxal phosphate)lysine modification.

The protein belongs to the TrpB family. In terms of assembly, tetramer of two alpha and two beta chains. Requires pyridoxal 5'-phosphate as cofactor.

It carries out the reaction (1S,2R)-1-C-(indol-3-yl)glycerol 3-phosphate + L-serine = D-glyceraldehyde 3-phosphate + L-tryptophan + H2O. It functions in the pathway amino-acid biosynthesis; L-tryptophan biosynthesis; L-tryptophan from chorismate: step 5/5. Its function is as follows. The beta subunit is responsible for the synthesis of L-tryptophan from indole and L-serine. This Shewanella piezotolerans (strain WP3 / JCM 13877) protein is Tryptophan synthase beta chain.